The following is a 124-amino-acid chain: Small ribosomal subunit protein uS11 (124 aa).

The interval arginine 102–arginine 124 is disordered.

Belongs to the universal ribosomal protein uS11 family. As to quaternary structure, part of the 30S ribosomal subunit.

In terms of biological role, located on the platform of the 30S subunit. The chain is Small ribosomal subunit protein uS11 from Methanococcus maripaludis (strain C5 / ATCC BAA-1333).